We begin with the raw amino-acid sequence, 705 residues long: Fatty acid oxidation complex subunit alpha (705 aa).

An enoyl-CoA hydratase region spans residues 1-188 (MGKTFNLTRR…KMGLVNDVVP (188 aa)). The 3-hydroxyacyl-CoA dehydrogenase stretch occupies residues 308–705 (RKVKKAVILG…AMAAEKARFF (398 aa)).

This sequence in the N-terminal section; belongs to the enoyl-CoA hydratase/isomerase family. The protein in the central section; belongs to the 3-hydroxyacyl-CoA dehydrogenase family. Heterotetramer of two alpha chains (FadJ) and two beta chains (FadI).

Its subcellular location is the cytoplasm. It catalyses the reaction a (3S)-3-hydroxyacyl-CoA = a (2E)-enoyl-CoA + H2O. The enzyme catalyses a 4-saturated-(3S)-3-hydroxyacyl-CoA = a (3E)-enoyl-CoA + H2O. It carries out the reaction a (3S)-3-hydroxyacyl-CoA + NAD(+) = a 3-oxoacyl-CoA + NADH + H(+). The catalysed reaction is (3S)-3-hydroxybutanoyl-CoA = (3R)-3-hydroxybutanoyl-CoA. The protein operates within lipid metabolism; fatty acid beta-oxidation. Its function is as follows. Catalyzes the formation of a hydroxyacyl-CoA by addition of water on enoyl-CoA. Also exhibits 3-hydroxyacyl-CoA epimerase and 3-hydroxyacyl-CoA dehydrogenase activities. This chain is Fatty acid oxidation complex subunit alpha, found in Shewanella oneidensis (strain ATCC 700550 / JCM 31522 / CIP 106686 / LMG 19005 / NCIMB 14063 / MR-1).